Here is a 1220-residue protein sequence, read N- to C-terminus: Protein transport protein Sec31A (1220 aa).

WD repeat units lie at residues 4-47 (KEVD…EIFE), 68-111 (RYHK…AGDK), 120-160 (KHTG…TPMT), 166-206 (QPPE…PIIK), 209-254 (DHSN…SPLR), 258-298 (NHAR…VLYE), and 301-342 (TNTQ…DGLR). The interval 161 to 471 (PGAKTQPPED…IDASQTEFEK (311 aa)) is interaction with SEC13. Residues 397-430 (SFSFGGKLVTFENVRMPSHQGAEQQQQQHHVFIS) form a WD 8; interaction with SEC13 repeat. Phosphoserine is present on residues serine 527 and serine 532. Lysine 647 participates in a covalent cross-link: Glycyl lysine isopeptide (Lys-Gly) (interchain with G-Cter in ubiquitin). Disordered stretches follow at residues 791 to 908 (GEPV…NAYP) and 924 to 1096 (QLYA…GNTF). Phosphoserine is present on serine 799. Positions 800 to 1113 (PKIPYEKQQL…TKKITKKPIP (314 aa)) are interaction with PDCD6. The ALG-2-binding site motif-2 (ABS-2) signature appears at 842–848 (GFIMHGN). Residues 849-859 (VNPNAAGQLPT) show a composition bias toward polar residues. The span at 869–882 (PPYPQPQPYQPAQP) shows a compositional bias: pro residues. Positions 962 to 972 (PSSSAYALPPG) are enriched in low complexity. Polar residues-rich tracts occupy residues 984-995 (PASQRTGPQNGW) and 1031-1053 (PQSQ…SSFP). The residue at position 1161 (threonine 1161) is a Phosphothreonine. Serine 1163 bears the Phosphoserine mark. A Glycyl lysine isopeptide (Lys-Gly) (interchain with G-Cter in ubiquitin) cross-link involves residue lysine 1217.

Belongs to the WD repeat SEC31 family. In terms of assembly, COPII is composed of at least 5 proteins: the SEC23/24 complex, the SEC13/31 complex and SAR1. SEC13 and SEC31 make a 2:2 tetramer that forms the edge element of the COPII outer coat. The tetramer self-assembles in multiple copies to form the complete polyhedral cage. Interacts (via WD 8) with SEC13. Interacts with PDCD6; interaction takes place in response to cytosolic calcium increase and leads to bridge together the BCR(KLHL12) complex and SEC31A, leading to monoubiquitination. Interacts with KLHL12. In terms of processing, monoubiquitinated by the BCR(KLHL12) E3 ubiquitin ligase complex, leading to regulate the size of COPII coats. In terms of tissue distribution, abundantly and ubiquitously expressed.

The protein localises to the cytoplasm. It localises to the cytoplasmic vesicle. Its subcellular location is the COPII-coated vesicle membrane. The protein resides in the endoplasmic reticulum membrane. It is found in the cytosol. Component of the coat protein complex II (COPII) which promotes the formation of transport vesicles from the endoplasmic reticulum (ER). The coat has two main functions, the physical deformation of the endoplasmic reticulum membrane into vesicles and the selection of cargo molecules. The chain is Protein transport protein Sec31A (SEC31A) from Homo sapiens (Human).